A 219-amino-acid chain; its full sequence is Orotate phosphoribosyltransferase (219 aa).

Lysine 26 is a binding site for 5-phospho-alpha-D-ribose 1-diphosphate. 34–35 lines the orotate pocket; the sequence is FF. 5-phospho-alpha-D-ribose 1-diphosphate is bound by residues 72-73, arginine 98, lysine 99, lysine 102, histidine 104, and 124-132; these read YK and DDVITAGTA. Orotate-binding residues include threonine 128 and arginine 156.

It belongs to the purine/pyrimidine phosphoribosyltransferase family. PyrE subfamily. As to quaternary structure, homodimer. Requires Mg(2+) as cofactor.

It carries out the reaction orotidine 5'-phosphate + diphosphate = orotate + 5-phospho-alpha-D-ribose 1-diphosphate. The protein operates within pyrimidine metabolism; UMP biosynthesis via de novo pathway; UMP from orotate: step 1/2. Functionally, catalyzes the transfer of a ribosyl phosphate group from 5-phosphoribose 1-diphosphate to orotate, leading to the formation of orotidine monophosphate (OMP). This Xylella fastidiosa (strain 9a5c) protein is Orotate phosphoribosyltransferase.